The following is a 348-amino-acid chain: Dihydroorotase (348 aa).

Zn(2+) is bound by residues H14 and H16. Substrate-binding positions include 16–18 (HLR) and N42. K100, H137, and H175 together coordinate Zn(2+). Position 100 is an N6-carboxylysine (K100). A substrate-binding site is contributed by H137. Position 220 (L220) interacts with substrate. Residue D248 participates in Zn(2+) binding. The active site involves D248. 2 residues coordinate substrate: H252 and A264.

It belongs to the metallo-dependent hydrolases superfamily. DHOase family. Class II DHOase subfamily. Homodimer. Zn(2+) is required as a cofactor.

The catalysed reaction is (S)-dihydroorotate + H2O = N-carbamoyl-L-aspartate + H(+). It participates in pyrimidine metabolism; UMP biosynthesis via de novo pathway; (S)-dihydroorotate from bicarbonate: step 3/3. Catalyzes the reversible cyclization of carbamoyl aspartate to dihydroorotate. This Azotobacter vinelandii (strain DJ / ATCC BAA-1303) protein is Dihydroorotase.